Consider the following 189-residue polypeptide: Penicillin-binding protein activator LpoB (189 aa).

An N-terminal signal peptide occupies residues 1–16; it reads MRRILFVALSVMFLAG. Cys17 carries N-palmitoyl cysteine lipidation. Residue Cys17 is the site of S-diacylglycerol cysteine attachment. A disordered region spans residues 18–52; the sequence is PSLPPEQPEPPTPVVPVTPSEKPTPPSEKVPEPPK. Residues 19–45 are compositionally biased toward pro residues; the sequence is SLPPEQPEPPTPVVPVTPSEKPTPPSE.

It belongs to the LpoB family. Interacts with PBP1b.

It is found in the cell outer membrane. Functionally, regulator of peptidoglycan synthesis that is essential for the function of penicillin-binding protein 1B (PBP1b). The protein is Penicillin-binding protein activator LpoB of Photorhabdus laumondii subsp. laumondii (strain DSM 15139 / CIP 105565 / TT01) (Photorhabdus luminescens subsp. laumondii).